The following is a 291-amino-acid chain: Formamidopyrimidine-DNA glycosylase (291 aa).

The active-site Schiff-base intermediate with DNA is the Pro2. Catalysis depends on Glu3, which acts as the Proton donor. Catalysis depends on Lys60, which acts as the Proton donor; for beta-elimination activity. Positions 108 and 127 each coordinate DNA. The segment at 257–291 (WVYRRGGQACRICSTPIRRESLCGRGTHWCPNCQR) adopts an FPG-type zinc-finger fold. Arg281 serves as the catalytic Proton donor; for delta-elimination activity.

The protein belongs to the FPG family. In terms of assembly, monomer. The cofactor is Zn(2+).

The enzyme catalyses Hydrolysis of DNA containing ring-opened 7-methylguanine residues, releasing 2,6-diamino-4-hydroxy-5-(N-methyl)formamidopyrimidine.. It catalyses the reaction 2'-deoxyribonucleotide-(2'-deoxyribose 5'-phosphate)-2'-deoxyribonucleotide-DNA = a 3'-end 2'-deoxyribonucleotide-(2,3-dehydro-2,3-deoxyribose 5'-phosphate)-DNA + a 5'-end 5'-phospho-2'-deoxyribonucleoside-DNA + H(+). Its function is as follows. Involved in base excision repair of DNA damaged by oxidation or by mutagenic agents. Acts as a DNA glycosylase that recognizes and removes damaged bases. Has a preference for oxidized purines, such as 7,8-dihydro-8-oxoguanine (8-oxoG). Has AP (apurinic/apyrimidinic) lyase activity and introduces nicks in the DNA strand. Cleaves the DNA backbone by beta-delta elimination to generate a single-strand break at the site of the removed base with both 3'- and 5'-phosphates. In Prochlorococcus marinus (strain MIT 9313), this protein is Formamidopyrimidine-DNA glycosylase.